The sequence spans 226 residues: Ribonuclease 3 (226 aa).

An RNase III domain is found at 6–128; it reads INRLQRKLGY…LIGGVFLDSN (123 aa). E41 contacts Mg(2+). D45 is a catalytic residue. The Mg(2+) site is built by D114 and E117. E117 is an active-site residue. Positions 155–225 constitute a DRBM domain; it reads DPKTRLQEYL…AEQALKKLEL (71 aa).

It belongs to the ribonuclease III family. Homodimer. Mg(2+) serves as cofactor.

It localises to the cytoplasm. The catalysed reaction is Endonucleolytic cleavage to 5'-phosphomonoester.. In terms of biological role, digests double-stranded RNA. Involved in the processing of primary rRNA transcript to yield the immediate precursors to the large and small rRNAs (23S and 16S). Processes some mRNAs, and tRNAs when they are encoded in the rRNA operon. Processes pre-crRNA and tracrRNA of type II CRISPR loci if present in the organism. The chain is Ribonuclease 3 from Salmonella typhi.